The following is a 464-amino-acid chain: Heterogeneous nuclear ribonucleoprotein K (464 aa).

Met1 is subject to N-acetylmethionine. The interval 1 to 37 (METEQPEETFPNTETNGEFGKRPAEDMEEEQAFKRSR) is disordered. A necessary for interaction with DDX1 region spans residues 1–276 (METEQPEETF…GRGGRPMPPS (276 aa)). Positions 19-37 (FGKRPAEDMEEEQAFKRSR) are enriched in basic and acidic residues. At Lys34 the chain carries N6-acetyllysine; alternate. A Glycyl lysine isopeptide (Lys-Gly) (interchain with G-Cter in SUMO1); alternate cross-link involves residue Lys34. Lys34 participates in a covalent cross-link: Glycyl lysine isopeptide (Lys-Gly) (interchain with G-Cter in SUMO2); alternate. Phosphoserine is present on Ser36. At Thr39 the chain carries Phosphothreonine. The KH 1 domain maps to 42 to 104 (MVELRILLQS…ETIGEILKKI (63 aa)). Glycyl lysine isopeptide (Lys-Gly) (interchain with G-Cter in SUMO2) cross-links involve residues Lys52 and Lys60. Tandem repeats lie at residues 54 to 76 (AGAV…NASV) and 59 to 62 (GKGG). Residues 54-421 (AGAVIGKGGK…QIRHESGASI (368 aa)) are 2 X 22 AA approximate repeats. Positions 59 to 407 (GKGGKNIKAL…LAGSIIGKGG (349 aa)) are 5 X 4 AA repeats of G-X-G-G. Ser75 and Ser116 each carry phosphoserine. One can recognise a KH 2 domain in the interval 144–209 (DCELRLLIHQ…DRVVECIKII (66 aa)). Residue Lys163 forms a Glycyl lysine isopeptide (Lys-Gly) (interchain with G-Cter in SUMO1); alternate linkage. Residue Lys163 forms a Glycyl lysine isopeptide (Lys-Gly) (interchain with G-Cter in SUMO2); alternate linkage. Lys198 is subject to N6-acetyllysine. The segment at 209-337 (ILDLISESPI…RPGDRYDGMV (129 aa)) is interaction with ZIK1. Phosphoserine is present on residues Ser214 and Ser216. A Glycyl lysine isopeptide (Lys-Gly) (interchain with G-Cter in SUMO2); alternate cross-link involves residue Lys219. Lys219 carries the post-translational modification N6-succinyllysine; alternate. Positions 236-273 (YGGFTMMFDDRRGRPVGFPMRGRGGFDRMPPGRGGRPM) are RNA-binding RGG-box. A run of 3 repeats spans residues 245 to 250 (DRRGRP), 257 to 260 (GRGG), and 267 to 270 (GRGG). Residues 245–329 (DRRGRPVGFP…LMAYDRRGRP (85 aa)) are 2 X 6 AA approximate repeats. The tract at residues 250–329 (PVGFPMRGRG…LMAYDRRGRP (80 aa)) is disordered. Over residues 252 to 266 (GFPMRGRGGFDRMPP) the composition is skewed to low complexity. Residues 276–285 (SRRDYDDMSP) are compositionally biased toward basic and acidic residues. Ser284 carries the phosphoserine modification. One copy of the 3-4 repeat lies at 295–298 (GRGG). At Arg316 the chain carries Omega-N-methylarginine. The 2-2 repeat unit spans residues 324-329 (DRRGRP). Arg377 carries the post-translational modification Omega-N-methylarginine. At Ser379 the chain carries Phosphoserine. Tyr380 bears the Phosphotyrosine mark. One can recognise a KH 3 domain in the interval 387 to 451 (IITTQVTIPK…DQIQNAQYLL (65 aa)). A run of 2 repeats spans residues 399 to 421 (AGSI…GASI) and 404 to 407 (GKGG). Lys405 carries the N6-acetyllysine; alternate modification. Lys405 is covalently cross-linked (Glycyl lysine isopeptide (Lys-Gly) (interchain with G-Cter in SUMO2); alternate). The residue at position 420 (Ser420) is a Phosphoserine. A Glycyl lysine isopeptide (Lys-Gly) (interchain with G-Cter in SUMO1); alternate cross-link involves residue Lys422. Lys422 participates in a covalent cross-link: Glycyl lysine isopeptide (Lys-Gly) (interchain with G-Cter in SUMO2); alternate. Lys422 is covalently cross-linked (Glycyl lysine isopeptide (Lys-Gly) (interchain with G-Cter in SUMO); alternate).

Identified in the spliceosome C complex. Interacts with ANKRD28, RBM42 and ZIK1. Interacts with DDX1. Interacts with MDM2; this interaction leads to ubiquitination and proteasomal degradation. Interacts with p53/TP53. Interacts with BRDT. Interacts with IVNS1ABP. Interacts with PPIA/CYPA. Part of a transcription inhibitory ribonucleoprotein complex composed at least of the circular RNA circZNF827, ZNF827 and HNRNPL. Post-translationally, sumoylated by CBX4. Sumoylation is increased upon DNA damage, such as that produced by doxorubicin, etoposide, UV light and camptothecin, due to enhanced CBX4 phosphorylation by HIPK2 under these conditions. Ubiquitinated by MDM2. Doxorubicin treatment does not affect monoubiquitination, but slightly decreases HNRNPK poly-ubiquitination. In terms of processing, O-glycosylated (O-GlcNAcylated), in a cell cycle-dependent manner.

It localises to the cytoplasm. It is found in the nucleus. Its subcellular location is the nucleoplasm. The protein localises to the cell projection. The protein resides in the podosome. Functionally, one of the major pre-mRNA-binding proteins. Binds tenaciously to poly(C) sequences. Likely to play a role in the nuclear metabolism of hnRNAs, particularly for pre-mRNAs that contain cytidine-rich sequences. Can also bind poly(C) single-stranded DNA. Plays an important role in p53/TP53 response to DNA damage, acting at the level of both transcription activation and repression. When sumoylated, acts as a transcriptional coactivator of p53/TP53, playing a role in p21/CDKN1A and 14-3-3 sigma/SFN induction. As far as transcription repression is concerned, acts by interacting with long intergenic RNA p21 (lincRNA-p21), a non-coding RNA induced by p53/TP53. This interaction is necessary for the induction of apoptosis, but not cell cycle arrest. As part of a ribonucleoprotein complex composed at least of ZNF827, HNRNPL and the circular RNA circZNF827 that nucleates the complex on chromatin, may negatively regulate the transcription of genes involved in neuronal differentiation. In Bos taurus (Bovine), this protein is Heterogeneous nuclear ribonucleoprotein K (HNRNPK).